The chain runs to 237 residues: Lectin alpha chain (237 aa).

2 residues coordinate Mn(2+): Glu8 and Asp10. Asp10, Tyr12, Asn14, and Asp19 together coordinate Ca(2+). Tyr12 is a binding site for a carbohydrate. Asp19 and His24 together coordinate Mn(2+). An a carbohydrate-binding site is contributed by 99–100 (LY). Asp208 is a Ca(2+) binding site. Arg228 contacts a carbohydrate.

This sequence belongs to the leguminous lectin family. Homotetramer. The beta and gamma chains are produced by partial proteolytic processing of the lectin alpha chain by an asparaginyl endopeptidase.

Its subcellular location is the vacuole. The protein localises to the aleurone grain. D-mannose/D-glucose-binding lectin with hemagglutinating activity towards rabbit and human erythrocytes. In rats, elicits an acute inflammatory response by inducing neutrophil migration and induces dose-dependent paw edema. This chain is Lectin alpha chain, found in Macropsychanthus wilsonii (Wilson's clusterpea).